The sequence spans 212 residues: Thymidylate kinase (212 aa).

Glycine 10–threonine 17 is a binding site for ATP.

Belongs to the thymidylate kinase family.

It carries out the reaction dTMP + ATP = dTDP + ADP. Phosphorylation of dTMP to form dTDP in both de novo and salvage pathways of dTTP synthesis. This is Thymidylate kinase from Yersinia pseudotuberculosis serotype O:1b (strain IP 31758).